The sequence spans 317 residues: Lipopolysaccharide heptosyltransferase 1 (317 aa).

ADP-L-glycero-beta-D-manno-heptose is bound by residues Thr187, Thr188, Lys192, Glu222, Met242, Asp261, Thr262, Gly263, and His266.

The protein belongs to the glycosyltransferase 9 family.

It localises to the cell inner membrane. It catalyses the reaction an alpha-Kdo-(2-&gt;4)-alpha-Kdo-(2-&gt;6)-lipid A + ADP-L-glycero-beta-D-manno-heptose = an L-alpha-D-Hep-(1-&gt;5)-[alpha-Kdo-(2-&gt;4)]-alpha-Kdo-(2-&gt;6)-lipid A + ADP + H(+). It participates in bacterial outer membrane biogenesis; LPS core biosynthesis. Its function is as follows. Glycosyltransferase involved in the biosynthesis of the core oligosaccharide region of lipopolysaccharide (LPS). Catalyzes the addition of the first heptose unit to one 3-deoxy-D-manno-octulosonic acid (Kdo) residue of the Kdo2-lipid A module. This Salmonella typhimurium (strain LT2 / SGSC1412 / ATCC 700720) protein is Lipopolysaccharide heptosyltransferase 1.